The chain runs to 758 residues: Protein SPT21 (758 aa).

4 disordered regions span residues 251 to 271 (NNTN…APKA), 372 to 414 (ININ…AGCR), 438 to 471 (GIEG…SITS), and 624 to 651 (VIDS…SDNN). Residues 395–408 (VKVKNSNSKNSAKS) show a composition bias toward low complexity. Phosphoserine is present on serine 454. Polar residues predominate over residues 626–651 (DSDNTKPQAGLINFSTPADQPASDNN).

Functionally, required for normal transcription at a number of loci in yeast. The sequence is that of Protein SPT21 (SPT21) from Saccharomyces cerevisiae (strain ATCC 204508 / S288c) (Baker's yeast).